The chain runs to 290 residues: Diaminopimelate epimerase (290 aa).

3 residues coordinate substrate: Asn17, Gln49, and Asn69. The active-site Proton donor is the Cys78. Residues 79–80, Asn166, Asn199, and 217–218 contribute to the substrate site; these read GN and ER. The Proton acceptor role is filled by Cys226. 227–228 contributes to the substrate binding site; the sequence is GS.

The protein belongs to the diaminopimelate epimerase family. Homodimer.

It is found in the cytoplasm. It carries out the reaction (2S,6S)-2,6-diaminopimelate = meso-2,6-diaminopimelate. Its pathway is amino-acid biosynthesis; L-lysine biosynthesis via DAP pathway; DL-2,6-diaminopimelate from LL-2,6-diaminopimelate: step 1/1. Catalyzes the stereoinversion of LL-2,6-diaminopimelate (L,L-DAP) to meso-diaminopimelate (meso-DAP), a precursor of L-lysine and an essential component of the bacterial peptidoglycan. The protein is Diaminopimelate epimerase of Nitrobacter hamburgensis (strain DSM 10229 / NCIMB 13809 / X14).